The primary structure comprises 199 residues: FMN-dependent NADH:quinone oxidoreductase (199 aa).

17 to 19 (SYS) lines the FMN pocket.

Belongs to the azoreductase type 1 family. In terms of assembly, homodimer. It depends on FMN as a cofactor.

The enzyme catalyses 2 a quinone + NADH + H(+) = 2 a 1,4-benzosemiquinone + NAD(+). It catalyses the reaction N,N-dimethyl-1,4-phenylenediamine + anthranilate + 2 NAD(+) = 2-(4-dimethylaminophenyl)diazenylbenzoate + 2 NADH + 2 H(+). Quinone reductase that provides resistance to thiol-specific stress caused by electrophilic quinones. Its function is as follows. Also exhibits azoreductase activity. Catalyzes the reductive cleavage of the azo bond in aromatic azo compounds to the corresponding amines. The sequence is that of FMN-dependent NADH:quinone oxidoreductase from Mycoplasmopsis synoviae (strain 53) (Mycoplasma synoviae).